The chain runs to 256 residues: Low molecular mass lipoprotein PBMHP-6 (256 aa).

Residues 1 to 19 form the signal peptide; sequence MRLTLFAFVLAVCALASNA.

Belongs to the 30 kDa lipoprotein family.

The protein resides in the secreted. This is Low molecular mass lipoprotein PBMHP-6 from Bombyx mori (Silk moth).